The sequence spans 489 residues: Ecdysteroid UDP-glucosyltransferase (489 aa).

A signal peptide spans 1–17; sequence MVFLIIALTLLATGARA.

Belongs to the UDP-glycosyltransferase family.

In terms of biological role, catalyzes the transfer of glucose from UDP-glucose to ecdysteroids which are insect molting hormones. Expression of egt interferes with normal insect development and block molting. The protein is Ecdysteroid UDP-glucosyltransferase (EGT) of Orgyia pseudotsugata (Douglas-fir tussock moth).